We begin with the raw amino-acid sequence, 261 residues long: Flagellar L-ring protein (261 aa).

A signal peptide spans 1–15; the sequence is MKRLLCLLLLTTLTG. Cys-16 carries the N-palmitoyl cysteine lipid modification. Residue Cys-16 is the site of S-diacylglycerol cysteine attachment. Over residues 121–133 the composition is skewed to basic and acidic residues; the sequence is KSADAELSKKNDS. The tract at residues 121–140 is disordered; the sequence is KSADAELSKKNDSSMDPLQV.

The protein belongs to the FlgH family. In terms of assembly, the basal body constitutes a major portion of the flagellar organelle and consists of four rings (L,P,S, and M) mounted on a central rod.

The protein resides in the cell outer membrane. It is found in the bacterial flagellum basal body. In terms of biological role, assembles around the rod to form the L-ring and probably protects the motor/basal body from shearing forces during rotation. This chain is Flagellar L-ring protein, found in Aliivibrio salmonicida (strain LFI1238) (Vibrio salmonicida (strain LFI1238)).